Reading from the N-terminus, the 316-residue chain is Petrobactin import system permease protein YclN (316 aa).

A run of 8 helical transmembrane segments spans residues 5–25 (YLFILLIILAVTSVFIGVEDL), 49–69 (LISIVIAGLSMSICGLIMQQI), 94–114 (LLLFTSASPLIKMLVAFVFAL), 133–153 (IFIPLVGLMLGNIVSSIATFI), 181–201 (LLYLSIPLVIIAYVYADKFTL), 224–244 (LIIVSLITSLVILTVGMLPFL), 268–288 (VLLGAVFVLFCDILGRIIIFP), and 290–310 (EISIGLMVGIIGSGIFLFMLL).

Belongs to the binding-protein-dependent transport system permease family. FecCD subfamily. In terms of assembly, the complex is composed of two ATP-binding proteins (YclP), two transmembrane proteins (YclN and YclO) and a solute-binding protein (YclQ).

The protein localises to the cell membrane. Functionally, part of the ABC transporter complex YclNOPQ involved in uptake of ferric-petrobactin. Petrobactin is a photoreactive 3,4-catecholate siderophore produced by many members of the B.cereus group, including B.anthracis. Probably responsible for the translocation of the substrate across the membrane. This Bacillus subtilis (strain 168) protein is Petrobactin import system permease protein YclN (yclN).